The sequence spans 493 residues: Cytochrome P450 2E1 (493 aa).

298-303 is a binding site for substrate; that stretch reads FAGTET. Cys437 lines the heme pocket.

Belongs to the cytochrome P450 family. As to quaternary structure, interacts with chaperones HSP70 and HSP90; this interaction is required for initial targeting to mitochondria. Requires heme as cofactor.

Its subcellular location is the endoplasmic reticulum membrane. It localises to the microsome membrane. It is found in the mitochondrion inner membrane. The catalysed reaction is an organic molecule + reduced [NADPH--hemoprotein reductase] + O2 = an alcohol + oxidized [NADPH--hemoprotein reductase] + H2O + H(+). The enzyme catalyses (5Z,8Z,11Z)-eicosatrienoate + reduced [NADPH--hemoprotein reductase] + O2 = 19-hydroxy-(5Z,8Z,11Z)-eicosatrienoate + oxidized [NADPH--hemoprotein reductase] + H2O + H(+). It carries out the reaction (5Z,8Z,11Z,14Z,17Z)-eicosapentaenoate + reduced [NADPH--hemoprotein reductase] + O2 = 19-hydroxy-(5Z,8Z,11Z,14Z,17Z)-eicosapentaenoate + oxidized [NADPH--hemoprotein reductase] + H2O + H(+). It catalyses the reaction (4Z,7Z,10Z,13Z,16Z,19Z)-docosahexaenoate + reduced [NADPH--hemoprotein reductase] + O2 = 21-hydroxy-(4Z,7Z,10Z,13Z,16Z,19Z)-docosahexaenoate + oxidized [NADPH--hemoprotein reductase] + H2O + H(+). The catalysed reaction is dodecanoate + reduced [NADPH--hemoprotein reductase] + O2 = 11-hydroxydodecanoate + oxidized [NADPH--hemoprotein reductase] + H2O + H(+). The enzyme catalyses tetradecanoate + reduced [NADPH--hemoprotein reductase] + O2 = 13-hydroxytetradecanoate + oxidized [NADPH--hemoprotein reductase] + H2O + H(+). It carries out the reaction 4-nitrophenol + NADPH + O2 + H(+) = 4-nitrocatechol + NADP(+) + H2O. It functions in the pathway lipid metabolism; fatty acid metabolism. Its activity is regulated as follows. The omega-1 hydroxylase activity is stimulated by cytochrome b5. Its function is as follows. A cytochrome P450 monooxygenase involved in the metabolism of fatty acids. Mechanistically, uses molecular oxygen inserting one oxygen atom into a substrate, and reducing the second into a water molecule, with two electrons provided by NADPH via cytochrome P450 reductase (NADPH--hemoprotein reductase). Catalyzes the hydroxylation of carbon-hydrogen bonds. Hydroxylates fatty acids specifically at the omega-1 position displaying the highest catalytic activity for saturated fatty acids. May be involved in the oxidative metabolism of xenobiotics. The chain is Cytochrome P450 2E1 (CYP2E1) from Mesocricetus auratus (Golden hamster).